A 426-amino-acid chain; its full sequence is Growth-regulating factor 9 (426 aa).

Residues 92–127 (PFTPSQWMELEHQALIYKYLNAKAPIPSSLLISISK) form the QLQ domain. Residues 151–195 (DPEPGRCRRTDGKKWRCSKEAMADHKYCERHINRNRHRSRKPVEN) form the WRC domain. 2 short sequence motifs (bipartite nuclear localization signal) span residues 156 to 166 (RCRRTDGKKWR) and 184 to 191 (RNRHRSRK). The disordered stretch occupies residues 184–222 (RNRHRSRKPVENQSRKTVKETPCAGSLPSSVGQGSFKKA). The span at 191–202 (KPVENQSRKTVK) shows a compositional bias: basic and acidic residues.

This sequence belongs to the GRF family.

The protein localises to the nucleus. Its function is as follows. Transcription activator that plays a regulatory role in gibberellin-induced stem elongation. This chain is Growth-regulating factor 9 (GRF9), found in Oryza sativa subsp. japonica (Rice).